Reading from the N-terminus, the 216-residue chain is Ribosomal RNA small subunit methyltransferase G (216 aa).

Residues Gly-73, Leu-78, 124–125, and Arg-139 each bind S-adenosyl-L-methionine; that span reads AE.

The protein belongs to the methyltransferase superfamily. RNA methyltransferase RsmG family.

Its subcellular location is the cytoplasm. Its function is as follows. Specifically methylates the N7 position of guanine in position 518 of 16S rRNA. The chain is Ribosomal RNA small subunit methyltransferase G from Pseudarthrobacter chlorophenolicus (strain ATCC 700700 / DSM 12829 / CIP 107037 / JCM 12360 / KCTC 9906 / NCIMB 13794 / A6) (Arthrobacter chlorophenolicus).